The primary structure comprises 131 residues: Histone H2A.2 (131 aa).

The disordered stretch occupies residues 1 to 22 (MSGGKGKAGSSEKASTSRSAKA). N-acetylserine is present on Ser-2. Residues Lys-5 and Lys-7 each carry the N6-acetyllysine modification. The residue at position 105 (Gln-105) is an N5-methylglutamine. Residue Ser-128 is modified to Phosphoserine. Positions 128–129 (SQ) match the [ST]-Q motif motif.

The protein belongs to the histone H2A family. As to quaternary structure, the nucleosome is a histone octamer containing two molecules each of H2A, H2B, H3 and H4 assembled in one H3-H4 heterotetramer and two H2A-H2B heterodimers. The octamer wraps approximately 147 bp of DNA. Phosphorylated to form H2AS128ph (gamma-H2A) in response to DNA double-strand breaks (DSBs) generated by exogenous genotoxic agents and by stalled replication forks. Phosphorylation is dependent on the DNA damage checkpoint kinases MEC1/ATR and TEL1/ATM, spreads on either side of a detected DSB site and may mark the surrounding chromatin for recruitment of proteins required for DNA damage signaling and repair. Gamma-H2A is removed from the DNA prior to the strand invasion-primer extension step of the repair process and subsequently dephosphorylated. Dephosphorylation is necessary for efficient recovery from the DNA damage checkpoint. In terms of processing, acetylated by ESA1 to form H2AK4ac and H2AK7ac.

The protein localises to the nucleus. The protein resides in the chromosome. Core component of nucleosome which plays a central role in DNA double strand break (DSB) repair. Nucleosomes wrap and compact DNA into chromatin, limiting DNA accessibility to the cellular machineries which require DNA as a template. Histones thereby play a central role in transcription regulation, DNA repair, DNA replication and chromosomal stability. DNA accessibility is regulated via a complex set of post-translational modifications of histones, also called histone code, and nucleosome remodeling. This Candida albicans (strain SC5314 / ATCC MYA-2876) (Yeast) protein is Histone H2A.2 (HTA2).